Here is a 362-residue protein sequence, read N- to C-terminus: Glutamate 5-kinase (362 aa).

K3 contacts ATP. Residues S43, D128, and N140 each coordinate substrate. Residues T160–D161 and T202–K208 contribute to the ATP site. The PUA domain maps to P267–S348.

This sequence belongs to the glutamate 5-kinase family.

It is found in the cytoplasm. It catalyses the reaction L-glutamate + ATP = L-glutamyl 5-phosphate + ADP. It functions in the pathway amino-acid biosynthesis; L-proline biosynthesis; L-glutamate 5-semialdehyde from L-glutamate: step 1/2. Its function is as follows. Catalyzes the transfer of a phosphate group to glutamate to form L-glutamate 5-phosphate. This is Glutamate 5-kinase from Xanthomonas campestris pv. campestris (strain 8004).